Here is a 113-residue protein sequence, read N- to C-terminus: Large ribosomal subunit protein uL22 (113 aa).

This sequence belongs to the universal ribosomal protein uL22 family. Part of the 50S ribosomal subunit.

Its function is as follows. This protein binds specifically to 23S rRNA; its binding is stimulated by other ribosomal proteins, e.g. L4, L17, and L20. It is important during the early stages of 50S assembly. It makes multiple contacts with different domains of the 23S rRNA in the assembled 50S subunit and ribosome. Functionally, the globular domain of the protein is located near the polypeptide exit tunnel on the outside of the subunit, while an extended beta-hairpin is found that lines the wall of the exit tunnel in the center of the 70S ribosome. The protein is Large ribosomal subunit protein uL22 of Pelotomaculum thermopropionicum (strain DSM 13744 / JCM 10971 / SI).